The primary structure comprises 395 residues: Putative 8-amino-7-oxononanoate synthase (395 aa).

Arginine 23 is a substrate binding site. 110–111 (GY) contributes to the pyridoxal 5'-phosphate binding site. Residue histidine 135 coordinates substrate. Residues serine 181, 206–209 (DEAH), and 237–240 (TFSK) contribute to the pyridoxal 5'-phosphate site. An N6-(pyridoxal phosphate)lysine modification is found at lysine 240. Position 354 (threonine 354) interacts with substrate.

It belongs to the class-II pyridoxal-phosphate-dependent aminotransferase family. BioF subfamily. Homodimer. Pyridoxal 5'-phosphate serves as cofactor.

It catalyses the reaction 6-carboxyhexanoyl-[ACP] + L-alanine + H(+) = (8S)-8-amino-7-oxononanoate + holo-[ACP] + CO2. It functions in the pathway cofactor biosynthesis; biotin biosynthesis. In terms of biological role, catalyzes the decarboxylative condensation of pimeloyl-[acyl-carrier protein] and L-alanine to produce 8-amino-7-oxononanoate (AON), [acyl-carrier protein], and carbon dioxide. The chain is Putative 8-amino-7-oxononanoate synthase (bioF) from Halalkalibacterium halodurans (strain ATCC BAA-125 / DSM 18197 / FERM 7344 / JCM 9153 / C-125) (Bacillus halodurans).